A 616-amino-acid polypeptide reads, in one-letter code: Proline--tRNA ligase (616 aa).

Belongs to the class-II aminoacyl-tRNA synthetase family. ProS type 1 subfamily. Homodimer.

The protein resides in the cytoplasm. The enzyme catalyses tRNA(Pro) + L-proline + ATP = L-prolyl-tRNA(Pro) + AMP + diphosphate. In terms of biological role, catalyzes the attachment of proline to tRNA(Pro) in a two-step reaction: proline is first activated by ATP to form Pro-AMP and then transferred to the acceptor end of tRNA(Pro). As ProRS can inadvertently accommodate and process non-cognate amino acids such as alanine and cysteine, to avoid such errors it has two additional distinct editing activities against alanine. One activity is designated as 'pretransfer' editing and involves the tRNA(Pro)-independent hydrolysis of activated Ala-AMP. The other activity is designated 'posttransfer' editing and involves deacylation of mischarged Ala-tRNA(Pro). The misacylated Cys-tRNA(Pro) is not edited by ProRS. This chain is Proline--tRNA ligase, found in Streptococcus gordonii (strain Challis / ATCC 35105 / BCRC 15272 / CH1 / DL1 / V288).